The sequence spans 173 residues: Bacterial deubiquitinase-like protein BilC (173 aa).

Zn(2+) contacts are provided by histidine 103, histidine 105, and aspartate 115.

The protein belongs to the M67B family. It depends on Zn(2+) as a cofactor.

In terms of biological role, component of the Bil (bacterial ISG15-like) antiviral defense system, composed of BilA, BilB, BilC and BilD. The Bil system specifically conjugates a ubiquitin-like moiety (bilA) to the bacteriophage central tail fiber (CTF, or tip attachment protein J) via reactions involving E1 (bilD) and E2 (bilB). Modifies CTF of phage SECphi27 and SECphi4, which probably interferes with assembly of the phage tail. Also modifies T5 baseplate hub protein pb3 (gene D16), but not gp27 of phage T6 (Bil defends against T6). BilC is a probable metalloprotease that may cleave non-specifically conjugated targets. Bil-encoding bacteria produce mostly defective phage SECphi27, many of which have phage assembly defects, including no tails. SECphi27 phage progeny produced in E.coli with the Bil system inject less DNA into naive host cells, maybe because the phage are less able to adsorb and inject their DNA into host cells. Functionally, expression of the Bil system in E.coli (strain MG1655) confers about 100-fold resistance to phage SECphi27, SECphi18, SECphi6, SECphi4 and T5, but not to SECphi17. When cells expressing the Bil system are infected by phage SECphi27 at low multiplicity of infection (0.03 MOI) the culture survives, at 3.0 MOI the culture collapses at the same time as cells without the Bil system. Cleaves a ubiquitin-GFP (Ubl-GFP) fusion protein in vivo. This is Bacterial deubiquitinase-like protein BilC from Collimonas sp. (strain OK412).